Here is a 329-residue protein sequence, read N- to C-terminus: Cytochrome f (329 aa).

Positions 1 to 44 (MKRNIIFLVIHQFENLTMKKKQNIFFIFLLTVFFNFTVNSNVSA) are cleaved as a signal peptide. Heme contacts are provided by Y45, C65, C68, and H69. Residues 295 to 315 (VQGLIIFLITIFITQLFLVLK) traverse the membrane as a helical segment.

It belongs to the cytochrome f family. As to quaternary structure, the 4 large subunits of the cytochrome b6-f complex are cytochrome b6, subunit IV (17 kDa polypeptide, petD), cytochrome f and the Rieske protein, while the 4 small subunits are PetG, PetL, PetM and PetN. The complex functions as a dimer. It depends on heme as a cofactor.

It localises to the plastid. Its subcellular location is the chloroplast thylakoid membrane. In terms of biological role, component of the cytochrome b6-f complex, which mediates electron transfer between photosystem II (PSII) and photosystem I (PSI), cyclic electron flow around PSI, and state transitions. The polypeptide is Cytochrome f (Tupiella akineta (Green alga)).